Here is a 249-residue protein sequence, read N- to C-terminus: Deoxyribose-phosphate aldolase (249 aa).

Asp-94 functions as the Proton donor/acceptor in the catalytic mechanism. Lys-158 serves as the catalytic Schiff-base intermediate with acetaldehyde. The active-site Proton donor/acceptor is Lys-200.

The protein belongs to the DeoC/FbaB aldolase family. DeoC type 1 subfamily.

It is found in the cytoplasm. The enzyme catalyses 2-deoxy-D-ribose 5-phosphate = D-glyceraldehyde 3-phosphate + acetaldehyde. Its pathway is carbohydrate degradation; 2-deoxy-D-ribose 1-phosphate degradation; D-glyceraldehyde 3-phosphate and acetaldehyde from 2-deoxy-alpha-D-ribose 1-phosphate: step 2/2. In terms of biological role, catalyzes a reversible aldol reaction between acetaldehyde and D-glyceraldehyde 3-phosphate to generate 2-deoxy-D-ribose 5-phosphate. The chain is Deoxyribose-phosphate aldolase from Thermoplasma volcanium (strain ATCC 51530 / DSM 4299 / JCM 9571 / NBRC 15438 / GSS1).